Here is a 100-residue protein sequence, read N- to C-terminus: Urease subunit gamma (100 aa).

It belongs to the urease gamma subunit family. Heterotrimer of UreA (gamma), UreB (beta) and UreC (alpha) subunits. Three heterotrimers associate to form the active enzyme.

It localises to the cytoplasm. The catalysed reaction is urea + 2 H2O + H(+) = hydrogencarbonate + 2 NH4(+). Its pathway is nitrogen metabolism; urea degradation; CO(2) and NH(3) from urea (urease route): step 1/1. The polypeptide is Urease subunit gamma (Pseudoalteromonas translucida (strain TAC 125)).